We begin with the raw amino-acid sequence, 84 residues long: Exodeoxyribonuclease 7 small subunit (84 aa).

This sequence belongs to the XseB family. Heterooligomer composed of large and small subunits.

The protein localises to the cytoplasm. The enzyme catalyses Exonucleolytic cleavage in either 5'- to 3'- or 3'- to 5'-direction to yield nucleoside 5'-phosphates.. Functionally, bidirectionally degrades single-stranded DNA into large acid-insoluble oligonucleotides, which are then degraded further into small acid-soluble oligonucleotides. This chain is Exodeoxyribonuclease 7 small subunit, found in Bartonella bacilliformis (strain ATCC 35685 / KC583 / Herrer 020/F12,63).